The sequence spans 440 residues: Chromosomal replication initiator protein DnaA (440 aa).

Residues 1–93 (MNVQLNEIWN…QTPVKPVAQE (93 aa)) form a domain I, interacts with DnaA modulators region. The tract at residues 94-101 (YTEDSNMS) is domain II. The tract at residues 102–318 (FLNPKYTFDT…GALNRVIAYS (217 aa)) is domain III, AAA+ region. ATP contacts are provided by Gly146, Gly148, Lys149, and Thr150. The tract at residues 319 to 440 (TLTENIINVD…EEIKKNITGG (122 aa)) is domain IV, binds dsDNA.

The protein belongs to the DnaA family. In terms of assembly, oligomerizes as a right-handed, spiral filament on DNA at oriC.

The protein localises to the cytoplasm. Its function is as follows. Plays an essential role in the initiation and regulation of chromosomal replication. ATP-DnaA binds to the origin of replication (oriC) to initiate formation of the DNA replication initiation complex once per cell cycle. Binds the DnaA box (a 9 base pair repeat at the origin) and separates the double-stranded (ds)DNA. Forms a right-handed helical filament on oriC DNA; dsDNA binds to the exterior of the filament while single-stranded (ss)DNA is stabiized in the filament's interior. The ATP-DnaA-oriC complex binds and stabilizes one strand of the AT-rich DNA unwinding element (DUE), permitting loading of DNA polymerase. After initiation quickly degrades to an ADP-DnaA complex that is not apt for DNA replication. Binds acidic phospholipids. The protein is Chromosomal replication initiator protein DnaA of Ruminiclostridium cellulolyticum (strain ATCC 35319 / DSM 5812 / JCM 6584 / H10) (Clostridium cellulolyticum).